The following is a 437-amino-acid chain: Glutamate-1-semialdehyde 2,1-aminomutase (437 aa).

Lys273 carries the post-translational modification N6-(pyridoxal phosphate)lysine.

This sequence belongs to the class-III pyridoxal-phosphate-dependent aminotransferase family. HemL subfamily. In terms of assembly, homodimer. Requires pyridoxal 5'-phosphate as cofactor.

The protein localises to the cytoplasm. The catalysed reaction is (S)-4-amino-5-oxopentanoate = 5-aminolevulinate. The protein operates within porphyrin-containing compound metabolism; protoporphyrin-IX biosynthesis; 5-aminolevulinate from L-glutamyl-tRNA(Glu): step 2/2. The protein is Glutamate-1-semialdehyde 2,1-aminomutase of Chlamydia felis (strain Fe/C-56) (Chlamydophila felis).